Reading from the N-terminus, the 663-residue chain is DNA ligase (663 aa).

Residues 31 to 35 (DYEYD), 80 to 81 (SL), and Glu-109 each bind NAD(+). The active-site N6-AMP-lysine intermediate is Lys-111. 4 residues coordinate NAD(+): Arg-132, Glu-167, Lys-283, and Lys-307. The Zn(2+) site is built by Cys-401, Cys-404, Cys-419, and Cys-424. The 78-residue stretch at 586–663 (KIDNRFLGKT…TEEDLKDMIK (78 aa)) folds into the BRCT domain.

Belongs to the NAD-dependent DNA ligase family. LigA subfamily. Requires Mg(2+) as cofactor. The cofactor is Mn(2+).

It carries out the reaction NAD(+) + (deoxyribonucleotide)n-3'-hydroxyl + 5'-phospho-(deoxyribonucleotide)m = (deoxyribonucleotide)n+m + AMP + beta-nicotinamide D-nucleotide.. Functionally, DNA ligase that catalyzes the formation of phosphodiester linkages between 5'-phosphoryl and 3'-hydroxyl groups in double-stranded DNA using NAD as a coenzyme and as the energy source for the reaction. It is essential for DNA replication and repair of damaged DNA. This is DNA ligase from Clostridium kluyveri (strain NBRC 12016).